The following is a 719-amino-acid chain: Phosphoribosylformylglycinamidine synthase subunit PurL (719 aa).

H45 is a catalytic residue. ATP-binding residues include Y48 and K87. Mg(2+) is bound at residue E89. Substrate contacts are provided by residues 90-93 and R112; that span reads SHNH. Catalysis depends on H91, which acts as the Proton acceptor. Mg(2+) is bound at residue D113. Q236 serves as a coordination point for substrate. D264 is a Mg(2+) binding site. 308-310 contacts substrate; that stretch reads ESQ. Positions 493 and 530 each coordinate ATP. N531 lines the Mg(2+) pocket. S533 provides a ligand contact to substrate.

It belongs to the FGAMS family. In terms of assembly, monomer. Part of the FGAM synthase complex composed of 1 PurL, 1 PurQ and 2 PurS subunits.

The protein localises to the cytoplasm. It carries out the reaction N(2)-formyl-N(1)-(5-phospho-beta-D-ribosyl)glycinamide + L-glutamine + ATP + H2O = 2-formamido-N(1)-(5-O-phospho-beta-D-ribosyl)acetamidine + L-glutamate + ADP + phosphate + H(+). Its pathway is purine metabolism; IMP biosynthesis via de novo pathway; 5-amino-1-(5-phospho-D-ribosyl)imidazole from N(2)-formyl-N(1)-(5-phospho-D-ribosyl)glycinamide: step 1/2. Functionally, part of the phosphoribosylformylglycinamidine synthase complex involved in the purines biosynthetic pathway. Catalyzes the ATP-dependent conversion of formylglycinamide ribonucleotide (FGAR) and glutamine to yield formylglycinamidine ribonucleotide (FGAM) and glutamate. The FGAM synthase complex is composed of three subunits. PurQ produces an ammonia molecule by converting glutamine to glutamate. PurL transfers the ammonia molecule to FGAR to form FGAM in an ATP-dependent manner. PurS interacts with PurQ and PurL and is thought to assist in the transfer of the ammonia molecule from PurQ to PurL. The polypeptide is Phosphoribosylformylglycinamidine synthase subunit PurL (Novosphingobium aromaticivorans (strain ATCC 700278 / DSM 12444 / CCUG 56034 / CIP 105152 / NBRC 16084 / F199)).